The chain runs to 210 residues: DNA-directed RNA polymerases I, II, and III subunit RPABC1 (210 aa).

M1 is modified (N-acetylmethionine). K81 is covalently cross-linked (Glycyl lysine isopeptide (Lys-Gly) (interchain with G-Cter in SUMO2)).

It belongs to the archaeal Rpo5/eukaryotic RPB5 RNA polymerase subunit family. In terms of assembly, component of the RNA polymerase I (Pol I), RNA polymerase II (Pol II) and RNA polymerase III (Pol III) complexes consisting of at least 13, 12 and 17 subunits, respectively. Pol I complex consists of a ten-subunit catalytic core composed of POLR1A/RPA1, POLR1B/RPA2, POLR1C/RPAC1, POLR1D/RPAC2, POLR1H/RPA12, POLR2E/RPABC1, POLR2F/RPABC2, POLR2H/RPABC3, POLR2K/RPABC4 and POLR2L/RPABC5; a mobile stalk subunit POLR1F/RPA43 protruding from the core and additional subunits homologous to general transcription factors POLR1E/RPA49 and POLR1G/RPA34. Part of Pol I pre-initiation complex (PIC), in which Pol I core assembles with RRN3 and promoter-bound UTBF and SL1/TIF-IB complex. Pol II complex contains a ten-subunit catalytic core composed of POLR2A/RPB1, POLR2B/RPB2, POLR2C/RPB3, POLR2I/RPB9, POLR2J/RPB11, POLR2E/RPABC1, POLR2F/RPABC2, POLR2H/RPABC3, POLR2K/RPABC4 and POLR2L/RPABC5 and a mobile stalk composed of two subunits POLR2D/RPB4 and POLR2G/RPB7. Part of Pol II(G) complex, in which Pol II core associates with an additional subunit POLR2M; unlike conventional Pol II, Pol II(G) functions as a transcriptional repressor. Part of TBP-based Pol II pre-initiation complex (PIC), in which Pol II core assembles with general transcription factors and other specific initiation factors including GTF2E1, GTF2E2, GTF2F1, GTF2F2, TCEA1, ERCC2, ERCC3, GTF2H2, GTF2H3, GTF2H4, GTF2H5, GTF2A1, GTF2A2, GTF2B and TBP; this large multi-subunit PIC complex mediates DNA unwinding and targets Pol II core to the transcription start site where the first phosphodiester bond forms. In Pol II complex, this subunit is present in 2-fold molar excess over the other subunits. Pol III complex consists of a ten-subunit catalytic core composed of POLR3A/RPC1, POLR3B/RPC2, POLR1C/RPAC1, POLR1D/RPAC2, POLR3K/RPC10, POLR2E/RPABC1, POLR2F/RPABC2, POLR2H/RPABC3, POLR2K/RPABC4 and POLR2L/RPABC5; a mobile stalk composed of two subunits POLR3H/RPC8 and CRCP/RPC9, protruding from the core and functioning primarily in transcription initiation; and additional subunits homologous to general transcription factors of the RNA polymerase II machinery, POLR3C/RPC3-POLR3F/RPC6-POLR3G/RPC7 heterotrimer required for transcription initiation and POLR3D/RPC4-POLR3E/RPC5 heterodimer involved in both transcription initiation and termination. Component of the PAQosome complex which is responsible for the biogenesis of several protein complexes and which consists of R2TP complex members RUVBL1, RUVBL2, RPAP3 and PIH1D1, URI complex members PFDN2, PFDN6, PDRG1, UXT and URI1 as well as ASDURF, POLR2E and DNAAF10/WDR92. Interacts with URI1. (Microbial infection) Interacts with HBV protein X.

The protein resides in the nucleus. Its subcellular location is the nucleolus. Its function is as follows. DNA-dependent RNA polymerase catalyzes the transcription of DNA into RNA using the four ribonucleoside triphosphates as substrates. Common component of RNA polymerases I, II and III which synthesize ribosomal RNA precursors, mRNA precursors and many functional non-coding RNAs, and small RNAs, such as 5S rRNA and tRNAs, respectively. Pol II is the central component of the basal RNA polymerase II transcription machinery. Pols are composed of mobile elements that move relative to each other. In Pol II, POLR2E/RPABC1 is part of the lower jaw surrounding the central large cleft and thought to grab the incoming DNA template. The sequence is that of DNA-directed RNA polymerases I, II, and III subunit RPABC1 from Homo sapiens (Human).